The following is a 642-amino-acid chain: ATP-dependent rRNA helicase spb4 (642 aa).

The short motif at 14 to 42 (WDGVTPALSEWVLDAVASMGFTRMTPVQA) is the Q motif element. The region spanning 45–250 (IPLFMAHKDV…RVGLRNPVKV (206 aa)) is the Helicase ATP-binding domain. 58–65 (AVTGSGKT) provides a ligand contact to ATP. The short motif at 198–201 (DEAD) is the DEAD box element. Residues 284-438 (AIKHILYSLE…TLTITDADAA (155 aa)) enclose the Helicase C-terminal domain. Positions 522–625 (AYKDKQREKR…RLLRRAAKDK (104 aa)) form a coiled coil. Composition is skewed to basic and acidic residues over residues 527-536 (QREKRRKEQV) and 577-628 (AKQA…KESK). The tract at residues 527–642 (QREKRRKEQV…DDDDEFKGFD (116 aa)) is disordered. Residues 632 to 642 (GDDDDEFKGFD) are compositionally biased toward acidic residues.

Belongs to the DEAD box helicase family. DDX55/SPB4 subfamily. In terms of assembly, component of pre-60S ribosomal complexes.

The protein resides in the nucleus. Its subcellular location is the nucleolus. The catalysed reaction is ATP + H2O = ADP + phosphate + H(+). ATP-binding RNA helicase involved in the biogenesis of 60S ribosomal subunits. Binds 90S pre-ribosomal particles and dissociates from pre-60S ribosomal particles after processing of 27SB pre-rRNA. Required for the normal formation of 18S rRNA through the processing of pre-rRNAs at sites A0, A1 and A2, and the normal formation of 25S and 5.8S rRNAs through the processing of pre-rRNAs at sites C1 and C2. This Aspergillus niger (strain ATCC MYA-4892 / CBS 513.88 / FGSC A1513) protein is ATP-dependent rRNA helicase spb4.